A 282-amino-acid chain; its full sequence is tRNA pseudouridine synthase A (282 aa).

The active-site Nucleophile is the Asp-53. A substrate-binding site is contributed by Tyr-119.

Belongs to the tRNA pseudouridine synthase TruA family. As to quaternary structure, homodimer.

It catalyses the reaction uridine(38/39/40) in tRNA = pseudouridine(38/39/40) in tRNA. Formation of pseudouridine at positions 38, 39 and 40 in the anticodon stem and loop of transfer RNAs. This is tRNA pseudouridine synthase A from Corynebacterium efficiens (strain DSM 44549 / YS-314 / AJ 12310 / JCM 11189 / NBRC 100395).